We begin with the raw amino-acid sequence, 79 residues long: Acyl carrier protein (79 aa).

Residues 2–77 (SEIGERVKKI…DATKFLEKNA (76 aa)) enclose the Carrier domain. Position 37 is an O-(pantetheine 4'-phosphoryl)serine (Ser-37).

The protein belongs to the acyl carrier protein (ACP) family. 4'-phosphopantetheine is transferred from CoA to a specific serine of apo-ACP by AcpS. This modification is essential for activity because fatty acids are bound in thioester linkage to the sulfhydryl of the prosthetic group.

The protein localises to the cytoplasm. The protein operates within lipid metabolism; fatty acid biosynthesis. In terms of biological role, carrier of the growing fatty acid chain in fatty acid biosynthesis. This is Acyl carrier protein from Nitrobacter winogradskyi (strain ATCC 25391 / DSM 10237 / CIP 104748 / NCIMB 11846 / Nb-255).